The sequence spans 270 residues: Hemin import ATP-binding protein HmuV (270 aa).

Residues 5 to 242 (LEAEAATYSV…SLINRVFDIE (238 aa)) enclose the ABC transporter domain. 37-44 (GPNGAGKS) provides a ligand contact to ATP.

The protein belongs to the ABC transporter superfamily. Heme (hemin) importer (TC 3.A.1.14.5) family. The complex is composed of two ATP-binding proteins (HmuV), two transmembrane proteins (HmuU) and a solute-binding protein (HmuT).

The protein localises to the cell inner membrane. Its function is as follows. Part of the ABC transporter complex HmuTUV involved in hemin import. Responsible for energy coupling to the transport system. The protein is Hemin import ATP-binding protein HmuV of Rhodopseudomonas palustris (strain BisA53).